Consider the following 307-residue polypeptide: Coenzyme PQQ synthesis protein B (307 aa).

This sequence belongs to the PqqB family.

Its pathway is cofactor biosynthesis; pyrroloquinoline quinone biosynthesis. May be involved in the transport of PQQ or its precursor to the periplasm. This chain is Coenzyme PQQ synthesis protein B, found in Gluconacetobacter diazotrophicus (strain ATCC 49037 / DSM 5601 / CCUG 37298 / CIP 103539 / LMG 7603 / PAl5).